The chain runs to 500 residues: Aspartyl/glutamyl-tRNA(Asn/Gln) amidotransferase subunit B (500 aa).

Belongs to the GatB/GatE family. GatB subfamily. Heterotrimer of A, B and C subunits.

It catalyses the reaction L-glutamyl-tRNA(Gln) + L-glutamine + ATP + H2O = L-glutaminyl-tRNA(Gln) + L-glutamate + ADP + phosphate + H(+). It carries out the reaction L-aspartyl-tRNA(Asn) + L-glutamine + ATP + H2O = L-asparaginyl-tRNA(Asn) + L-glutamate + ADP + phosphate + 2 H(+). In terms of biological role, allows the formation of correctly charged Asn-tRNA(Asn) or Gln-tRNA(Gln) through the transamidation of misacylated Asp-tRNA(Asn) or Glu-tRNA(Gln) in organisms which lack either or both of asparaginyl-tRNA or glutaminyl-tRNA synthetases. The reaction takes place in the presence of glutamine and ATP through an activated phospho-Asp-tRNA(Asn) or phospho-Glu-tRNA(Gln). The chain is Aspartyl/glutamyl-tRNA(Asn/Gln) amidotransferase subunit B from Rhizobium etli (strain CIAT 652).